A 110-amino-acid polypeptide reads, in one-letter code: Holo-[acyl-carrier-protein] synthase (110 aa).

Residues Asp8 and Glu54 each contribute to the Mg(2+) site.

Belongs to the P-Pant transferase superfamily. AcpS family. Requires Mg(2+) as cofactor.

The protein resides in the cytoplasm. It carries out the reaction apo-[ACP] + CoA = holo-[ACP] + adenosine 3',5'-bisphosphate + H(+). In terms of biological role, transfers the 4'-phosphopantetheine moiety from coenzyme A to a Ser of acyl-carrier-protein. The protein is Holo-[acyl-carrier-protein] synthase of Mycoplasma mycoides subsp. mycoides SC (strain CCUG 32753 / NCTC 10114 / PG1).